The following is a 565-amino-acid chain: Carboxylesterase 1D (565 aa).

The signal sequence occupies residues 1–18 (MRLYPLVWLFLAACTAWG). N79 carries N-linked (GlcNAc...) asparagine glycosylation. C87 and C116 are oxidised to a cystine. S221 functions as the Acyl-ester intermediate in the catalytic mechanism. Residues C273 and C284 are joined by a disulfide bond. Residue E353 is the Charge relay system of the active site. K382 carries the post-translational modification N6-succinyllysine. Residue H466 is the Charge relay system of the active site. N-linked (GlcNAc...) asparagine glycosylation occurs at N489. The short motif at 562–565 (HVEL) is the Prevents secretion from ER element.

The protein belongs to the type-B carboxylesterase/lipase family. Homotrimer. Detected in liver, lung and testis, but not in kidney (at protein level).

Its subcellular location is the endoplasmic reticulum lumen. It is found in the cytoplasm. It localises to the cytosol. The protein localises to the lipid droplet. The protein resides in the microsome. The catalysed reaction is all-trans-retinyl hexadecanoate + H2O = all-trans-retinol + hexadecanoate + H(+). The enzyme catalyses a carboxylic ester + H2O = an alcohol + a carboxylate + H(+). It carries out the reaction a long-chain fatty acyl ethyl ester + H2O = a long-chain fatty acid + ethanol + H(+). Its activity is regulated as follows. FAEE-synthesizing and PNPB-hydrolyzing activities are both inhibited by DFP. Functionally, major lipase in white adipose tissue. Involved in the metabolism of xenobiotics and of natural substrates. Hydrolyzes triacylglycerols and monoacylglycerols, with a preference for monoacylglycerols. The susceptibility of the substrate increases with decreasing acyl chain length of the fatty acid moiety. Catalyzes the synthesis of fatty acid ethyl esters. Hydrolyzes retinyl esters. The chain is Carboxylesterase 1D from Rattus norvegicus (Rat).